We begin with the raw amino-acid sequence, 245 residues long: 1-(5-phosphoribosyl)-5-[(5-phosphoribosylamino)methylideneamino] imidazole-4-carboxamide isomerase (245 aa).

Catalysis depends on aspartate 7, which acts as the Proton acceptor. Residue aspartate 129 is the Proton donor of the active site.

The protein belongs to the HisA/HisF family.

The protein localises to the cytoplasm. It carries out the reaction 1-(5-phospho-beta-D-ribosyl)-5-[(5-phospho-beta-D-ribosylamino)methylideneamino]imidazole-4-carboxamide = 5-[(5-phospho-1-deoxy-D-ribulos-1-ylimino)methylamino]-1-(5-phospho-beta-D-ribosyl)imidazole-4-carboxamide. It functions in the pathway amino-acid biosynthesis; L-histidine biosynthesis; L-histidine from 5-phospho-alpha-D-ribose 1-diphosphate: step 4/9. This Escherichia coli O81 (strain ED1a) protein is 1-(5-phosphoribosyl)-5-[(5-phosphoribosylamino)methylideneamino] imidazole-4-carboxamide isomerase.